The following is a 123-amino-acid chain: Small ribosomal subunit protein uS12cz/uS12cy (123 aa).

Belongs to the universal ribosomal protein uS12 family. Part of the 30S ribosomal subunit.

The protein resides in the plastid. It is found in the chloroplast. Functionally, with S4 and S5 plays an important role in translational accuracy. Located at the interface of the 30S and 50S subunits. This chain is Small ribosomal subunit protein uS12cz/uS12cy (rps12-A), found in Platanus occidentalis (Sycamore).